We begin with the raw amino-acid sequence, 319 residues long: Ferrochelatase (319 aa).

The Fe cation site is built by His192 and Glu271.

It belongs to the ferrochelatase family.

The protein localises to the cytoplasm. It carries out the reaction heme b + 2 H(+) = protoporphyrin IX + Fe(2+). Its pathway is porphyrin-containing compound metabolism; protoheme biosynthesis; protoheme from protoporphyrin-IX: step 1/1. In terms of biological role, catalyzes the ferrous insertion into protoporphyrin IX. This Geotalea daltonii (strain DSM 22248 / JCM 15807 / FRC-32) (Geobacter daltonii) protein is Ferrochelatase.